The sequence spans 398 residues: Succinate--CoA ligase [ADP-forming] subunit beta (398 aa).

In terms of domain architecture, ATP-grasp spans 9 to 254; the sequence is KRLLHEYGAP…ISEEDPKEIE (246 aa). ATP is bound by residues lysine 46, 53–55, glutamate 109, alanine 112, and glutamate 117; that span reads GRG. Residues asparagine 209 and aspartate 223 each coordinate Mg(2+). Residues asparagine 274 and 331–333 contribute to the substrate site; that span reads GIM.

It belongs to the succinate/malate CoA ligase beta subunit family. In terms of assembly, heterotetramer of two alpha and two beta subunits. Mg(2+) serves as cofactor.

It catalyses the reaction succinate + ATP + CoA = succinyl-CoA + ADP + phosphate. The catalysed reaction is GTP + succinate + CoA = succinyl-CoA + GDP + phosphate. It functions in the pathway carbohydrate metabolism; tricarboxylic acid cycle; succinate from succinyl-CoA (ligase route): step 1/1. In terms of biological role, succinyl-CoA synthetase functions in the citric acid cycle (TCA), coupling the hydrolysis of succinyl-CoA to the synthesis of either ATP or GTP and thus represents the only step of substrate-level phosphorylation in the TCA. The beta subunit provides nucleotide specificity of the enzyme and binds the substrate succinate, while the binding sites for coenzyme A and phosphate are found in the alpha subunit. This chain is Succinate--CoA ligase [ADP-forming] subunit beta, found in Bartonella bacilliformis (strain ATCC 35685 / KC583 / Herrer 020/F12,63).